Reading from the N-terminus, the 116-residue chain is MNLYDKAHELARVLKDCPEVVELRNTSVKMKENEDNLKMLKDFRQLQYEAYYEQLNNEKISEETETKLNKLGSIIAMNKTVSNYLEAESRFAVIWEDLIKILNEAVDVDLSFESKK.

The protein belongs to the UPF0342 family.

This chain is UPF0342 protein CTC_01059, found in Clostridium tetani (strain Massachusetts / E88).